The primary structure comprises 72 residues: uncharacterized protein (72 aa).

This is an uncharacterized protein from Escherichia coli (Bacteriophage T4).